A 431-amino-acid chain; its full sequence is Adenylosuccinate synthetase (431 aa).

GTP is bound by residues 21–27 (GDEGKGK) and 49–51 (GHT). Residue Asp22 is the Proton acceptor of the active site. Mg(2+) contacts are provided by Asp22 and Gly49. Residues 22–25 (DEGK), 47–50 (NAGH), Thr138, Arg152, Asn230, Thr245, and Arg309 each bind IMP. Residue His50 is the Proton donor of the active site. 305–311 (ATTGRPR) contributes to the substrate binding site. GTP-binding positions include Arg311, 337 to 339 (KLD), and 419 to 421 (GNG).

The protein belongs to the adenylosuccinate synthetase family. In terms of assembly, homodimer. Mg(2+) serves as cofactor.

The protein localises to the cytoplasm. The enzyme catalyses IMP + L-aspartate + GTP = N(6)-(1,2-dicarboxyethyl)-AMP + GDP + phosphate + 2 H(+). The protein operates within purine metabolism; AMP biosynthesis via de novo pathway; AMP from IMP: step 1/2. Functionally, plays an important role in the de novo pathway and in the salvage pathway of purine nucleotide biosynthesis. Catalyzes the first committed step in the biosynthesis of AMP from IMP. The sequence is that of Adenylosuccinate synthetase from Paramecium tetraurelia.